A 79-amino-acid chain; its full sequence is Panulirin (79 aa).

Residues M1 to G22 form the signal peptide. Positions D23–P26 are excised as a propeptide. 3 disulfides stabilise this stretch: C33-C63, C40-C56, and C46-C64. Positions Q75–A79 are excised as a propeptide.

In terms of assembly, monomer. In terms of processing, contains 3 disulfide bonds. In terms of tissue distribution, expressed in hemocytes (at protein level).

Involved in the melanization cascade in response to lipopolysaccharide (LPS). In vitro, reversibly and competitively inhibits trypsin (Ki=8.6 nM) but not serine proteases chymotrypsin, elastase, subtilisin, thrombin and plasmin, cysteine peptidase papain or metallopeptidase carboxypeptidase A. The polypeptide is Panulirin (Panulirus argus (Caribbean spiny lobster)).